Consider the following 772-residue polypeptide: NAD(P)H-quinone oxidoreductase subunit 5, chloroplastic (772 aa).

The next 16 membrane-spanning stretches (helical) occupy residues 9–29, 40–60, 89–109, 125–145, 147–167, 185–205, 220–240, 259–279, 290–312, 328–348, 355–375, 397–417, 426–446, 550–570, 604–624, and 731–751; these read WIIPFIPLPVPILIGMGLLLF, WSFPSILLLSMVMLLSVYLSI, IDPLASIMLILITTVGILVLF, FAYLSFFNTSMLGLVTSSNLI, IYIFWELVGMCSYLLIGFWFT, GDFGLLLGILGLYWITGSFEF, NQVHFLFVTLCSFLLFAGAVA, TPISALIHAATMVAAGIFLVA, YIMNLISLIGIITVLLGATLALA, LGYMMLALGMGSYRAALFHLI, ALLFLGSGSIIHSMESIVGYS, TAFLVGTLSLCGIPPLACFWS, WLYSPIFAIIACSTAGFTAFY, LFSLFVLVLFTLFVAAIGIPF, FVTNASFSVSIALLGIFIATF, and IFIFIFLLMDSFFTNLPFFVL.

The protein belongs to the complex I subunit 5 family. As to quaternary structure, NDH is composed of at least 16 different subunits, 5 of which are encoded in the nucleus.

The protein resides in the plastid. The protein localises to the chloroplast thylakoid membrane. It carries out the reaction a plastoquinone + NADH + (n+1) H(+)(in) = a plastoquinol + NAD(+) + n H(+)(out). The enzyme catalyses a plastoquinone + NADPH + (n+1) H(+)(in) = a plastoquinol + NADP(+) + n H(+)(out). In terms of biological role, NDH shuttles electrons from NAD(P)H:plastoquinone, via FMN and iron-sulfur (Fe-S) centers, to quinones in the photosynthetic chain and possibly in a chloroplast respiratory chain. The immediate electron acceptor for the enzyme in this species is believed to be plastoquinone. Couples the redox reaction to proton translocation, and thus conserves the redox energy in a proton gradient. The polypeptide is NAD(P)H-quinone oxidoreductase subunit 5, chloroplastic (ndhF) (Oenothera argillicola (Appalachian evening primrose)).